The chain runs to 232 residues: Large ribosomal subunit protein uL1 (232 aa).

The protein belongs to the universal ribosomal protein uL1 family. As to quaternary structure, part of the 50S ribosomal subunit.

In terms of biological role, binds directly to 23S rRNA. The L1 stalk is quite mobile in the ribosome, and is involved in E site tRNA release. Protein L1 is also a translational repressor protein, it controls the translation of the L11 operon by binding to its mRNA. The chain is Large ribosomal subunit protein uL1 from Chlamydia trachomatis serovar L2 (strain ATCC VR-902B / DSM 19102 / 434/Bu).